A 547-amino-acid polypeptide reads, in one-letter code: 2-succinyl-5-enolpyruvyl-6-hydroxy-3-cyclohexene-1-carboxylate synthase (547 aa).

Belongs to the TPP enzyme family. MenD subfamily. As to quaternary structure, homodimer. Mg(2+) is required as a cofactor. Requires Mn(2+) as cofactor. It depends on thiamine diphosphate as a cofactor.

It catalyses the reaction isochorismate + 2-oxoglutarate + H(+) = 5-enolpyruvoyl-6-hydroxy-2-succinyl-cyclohex-3-ene-1-carboxylate + CO2. It functions in the pathway quinol/quinone metabolism; 1,4-dihydroxy-2-naphthoate biosynthesis; 1,4-dihydroxy-2-naphthoate from chorismate: step 2/7. Its pathway is quinol/quinone metabolism; menaquinone biosynthesis. Its function is as follows. Catalyzes the thiamine diphosphate-dependent decarboxylation of 2-oxoglutarate and the subsequent addition of the resulting succinic semialdehyde-thiamine pyrophosphate anion to isochorismate to yield 2-succinyl-5-enolpyruvyl-6-hydroxy-3-cyclohexene-1-carboxylate (SEPHCHC). This is 2-succinyl-5-enolpyruvyl-6-hydroxy-3-cyclohexene-1-carboxylate synthase from Mycobacterium sp. (strain KMS).